A 127-amino-acid polypeptide reads, in one-letter code: Evasin P467 (127 aa).

A signal peptide spans 1 to 21; sequence MALKACITVIAVVYVVQVVRG. 4 disulfides stabilise this stretch: cysteine 42/cysteine 63, cysteine 59/cysteine 100, cysteine 76/cysteine 105, and cysteine 95/cysteine 114. Asparagine 49 and asparagine 94 each carry an N-linked (GlcNAc...) asparagine glycan.

It is found in the secreted. Salivary chemokine-binding protein which binds to host chemokines CCL1, CCL2, CCL3 and CCL5. The chain is Evasin P467 from Rhipicephalus pulchellus (Yellow backed tick).